The primary structure comprises 121 residues: MSITKDQIIEAVAAMSVMDVVELISAMEEKFGVSAAAAVAVAAGPVEAAEEKTEFDVILKAAGANKVAVIKAVRGATGLGLKEAKDLVESAPAALKEGVSKDDAEALKKSLEEAGAEVEVK.

The protein belongs to the bacterial ribosomal protein bL12 family. Homodimer. Part of the ribosomal stalk of the 50S ribosomal subunit. Forms a multimeric L10(L12)X complex, where L10 forms an elongated spine to which 2 to 4 L12 dimers bind in a sequential fashion. Binds GTP-bound translation factors.

In terms of biological role, forms part of the ribosomal stalk which helps the ribosome interact with GTP-bound translation factors. Is thus essential for accurate translation. The chain is Large ribosomal subunit protein bL12 from Shigella sonnei (strain Ss046).